The chain runs to 1018 residues: Fibronectin-binding protein A (1018 aa).

The N-terminal stretch at 1–36 (MKNNLRYGIRKHKLGAASVFLGTMIVVGMGQDKEAA) is a signal peptide. Positions 7 to 18 (YGIRKHKLGAAS) match the YSIRK-G/S signaling motif motif. Positions 37–511 (ASEQKTTTVE…SNKANGNGKN (475 aa)) are ligand-binding A region. 2 disordered regions span residues 38-61 (SEQKTTTVEENGNSATDNKTSETQ) and 78-195 (ATVT…ETGT). Composition is skewed to polar residues over residues 39–61 (EQKTTTVEENGNSATDNKTSETQ) and 78–92 (ATVTEQPSNATQVTT). Basic and acidic residues predominate over residues 112–126 (TVKEEVVKEEAKPQV). The segment covering 129–139 (TTQSQDNSGDQ) has biased composition (polar residues). The segment at 194-511 (GTDVTSKVTV…SNKANGNGKN (318 aa)) is fibrinogen/elastin/tropoelastin-binding. Residues 512 to 872 (GPIIQNNKFE…EGQQTIEEDT (361 aa)) form a fibronectin-binding region. The B-1 repeat unit spans residues 545 to 574 (EEYDSSTLDIDYHTAIDGGGGYVDGYIETI). Positions 545–604 (EEYDSSTLDIDYHTAIDGGGGYVDGYIETIEETDSSAIDIDYHTAVDSEAGHVGGYTESS) are 2 X approximate tandem repeats. Residues 575–604 (EETDSSAIDIDYHTAVDSEAGHVGGYTESS) form a B-2 repeat. Disordered regions lie at residues 595–622 (GHVGGYTESSEESNPIDFEESTHENSKH), 740–813 (LGYE…DIDF), and 827–997 (EIIE…GMLF). The D-1 repeat unit spans residues 745–782 (GQNSGNQSFEEDTEEDKPKYEQGGNIVDIDFDSVPQIH). Residues 745 to 878 (GQNSGNQSFE…EEDTTPPIVP (134 aa)) are 4 X approximate tandem repeats. One copy of the D-2 repeat lies at 783 to 820 (GQNKGNQSFEEDTEKDKPKYEHGGNIIDIDFDSVPHIH). The stretch at 821–859 (GFNKHTEIIEEDTNKDKPSYQFGGHNSVDFEEDTLPKVS) is one D-3 repeat. Residues 827–838 (EIIEEDTNKDKP) are compositionally biased toward basic and acidic residues. The stretch at 860-878 (GQNEGQQTIEEDTTPPIVP) is one D-4; truncated repeat. Positions 875 to 938 (PIVPPTPPTP…PAEPGKPVPP (64 aa)) are enriched in pro residues. WR repeat units lie at residues 879–892 (PTPPTPEVPSEPET), 893–906 (PTPPTPEVPSEPET), 907–920 (PTPPTPEVPSEPET), 921–934 (PTPPTPEVPAEPGK), and 935–948 (PVPPAKEEPKKPSK). Residues 879-948 (PTPPTPEVPS…AKEEPKKPSK (70 aa)) are 5 X tandem repeats, Pro-rich (WR). The LPXTG sorting signal motif lies at 982-986 (LPETG). A Pentaglycyl murein peptidoglycan amidated threonine modification is found at T985. The propeptide at 986–1018 (GGEESTNKGMLFGGLFSILGLALLRRNKKNHKA) is removed by sortase.

The protein localises to the secreted. The protein resides in the cell wall. Functionally, promotes bacterial attachment to multiple substrates, such as fibronectin (Fn), fibrinogen (Fg), elastin peptides and tropoelastin. This confers to S.aureus the ability to invade endothelial cells. Promotes adherence to and aggregation of activated platelets. The protein is Fibronectin-binding protein A of Staphylococcus aureus (strain USA300).